Here is a 539-residue protein sequence, read N- to C-terminus: Glutathione synthetase, chloroplastic (539 aa).

Residues 1-61 (MGSGCSSLSY…SPLRCGRSFK (61 aa)) constitute a chloroplast transit peptide. Residue R193 participates in substrate binding. E209 is a binding site for ATP. Residues E209 and N211 each contribute to the Mg(2+) site. Substrate is bound by residues 213 to 216 (ISCS), 281 to 283 (ERN), Q287, and 335 to 338 (RSGY). Residues K374, 428 to 437 (KPQREGGGNN), Y439, 464 to 467 (MQRI), and E490 each bind ATP. E432 contributes to the Mg(2+) binding site. Residue R515 coordinates substrate. ATP contacts are provided by K517 and E523. A substrate-binding site is contributed by 526–527 (VA).

This sequence belongs to the eukaryotic GSH synthase family. In terms of assembly, homodimer. Requires Mg(2+) as cofactor.

Its subcellular location is the plastid. It is found in the chloroplast. The enzyme catalyses gamma-L-glutamyl-L-cysteine + glycine + ATP = glutathione + ADP + phosphate + H(+). The protein operates within sulfur metabolism; glutathione biosynthesis; glutathione from L-cysteine and L-glutamate: step 2/2. This chain is Glutathione synthetase, chloroplastic (GSH2), found in Arabidopsis thaliana (Mouse-ear cress).